The following is a 240-amino-acid chain: Epoxyqueuosine reductase QueH (240 aa).

Cysteine 43, cysteine 44, cysteine 129, and cysteine 132 together coordinate [4Fe-4S] cluster. Residues cysteine 211 and cysteine 213 are joined by a disulfide bond.

Belongs to the QueH family.

The enzyme catalyses epoxyqueuosine(34) in tRNA + AH2 = queuosine(34) in tRNA + A + H2O. It participates in tRNA modification; tRNA-queuosine biosynthesis. Functionally, catalyzes the conversion of epoxyqueuosine (oQ) to queuosine (Q), which is a hypermodified base found in the wobble positions of tRNA(Asp), tRNA(Asn), tRNA(His) and tRNA(Tyr). This Staphylococcus aureus (strain Mu50 / ATCC 700699) protein is Epoxyqueuosine reductase QueH.